Here is a 104-residue protein sequence, read N- to C-terminus: Type IV secretion system protein PtlB homolog (104 aa).

The helical transmembrane segment at 30 to 50 (IALLGIWFSIAFLALFPVALL) threads the bilayer.

Belongs to the virB3 family.

The protein resides in the cell membrane. The chain is Type IV secretion system protein PtlB homolog (ptlB) from Bordetella parapertussis (strain 12822 / ATCC BAA-587 / NCTC 13253).